The chain runs to 957 residues: MQPLVMQGCPYTLPRCHEWHAADRFHHSSSLRNTCPQPQVRAAVTIPAPPWDGAGDPCLSPKLLNGTVGATGPLEPSAMNLCWNEIKKKSHNLRARLEAFSDLSGKLQLPLREIIDWLSQKDEELSAQLPLQGDVALVQQEKETHAAFMEEVKSKGPYISSVLESAQAFLSQHPFEELEESQSESKDTSPRQRIQNLSRFVWKQATVASELWEKLTARCVDQHRHIEHTLEHLLEIQGAMEELSSTLTQAEGVRATWEPIGDLFIDSLPEHIQAIKLFKEEFSPVKDGVKLVNDLAHQLAISDVHLSMENSRALEQINIRWKQLQVSVAERLKQLQDAHRDFGPGSQHFLSTSVQVPWERAISPNKVPYYINHQAQTTCWDHPKMTELYQTLADLNNIKFSAYRTAMKLRRVQKALRLDLVTLTTALEIFNEHDLQASEHVMDVVEVIHCLTALYERLEEERGILVNVPLCVDMSLNWLLNVFDSGRSGKMRALSFKTGIACLCGTEVKEKLQYLFSQVANSGSQCDQRHLGALLHEAIQVPRQLGEVAAFGGSNVEPSVRSCFRFSTGKPVIEASQFLEWVNLEPQSMVWLAVLHRVTIAEQVKHQTKCSICRQCPIKGFRYRSLKQFNVDICQTCFLTGRASKGNKLHYPIMEYYTPTTSSENMRDFATTLKNKFRSKQYFSKHPQRGYLPVQSVLESDCSETPASSPMLPHADTHSRIEHFASRLAEMESQNCSFFNDSLSPDDSIDEDQYLLRHSSPITDREPAFGQQAPCSMATESKGELEKILAHLEDENRILQGELRRLKWQHEEAAEAPTLVEGSAEATPDHRNEELLAEARILRQHKSRLETRMQILEDHNKQLESQLQRLRELLLQPPSESDGNGSAGSSLASSPRQSEGSHPREKGQTTPDTEVADDVGSKSQDVSLCLEDIMEKLRHAFPSVRSSDVTANTLLAS.

2 Spectrin repeats span residues 102–179 and 231–337; these read DLSG…EELE and EHLL…QLQD. Residues 358–383 form the WW domain; that stretch reads WERAISPNKVPYYINHQAQTTCWDHP. Residues 605-661 form a ZZ-type; degenerate zinc finger; sequence KHQTKCSICRQCPIKGFRYRSLKQFNVDICQTCFLTGRASKGNKLHYPIMEYYTPTT. The Zn(2+) site is built by cysteine 610, cysteine 613, cysteine 634, and cysteine 637. Serine 748 bears the Phosphoserine mark. Low complexity predominate over residues 876–894; sequence QPPSESDGNGSAGSSLASS. Positions 876 to 923 are disordered; it reads QPPSESDGNGSAGSSLASSPRQSEGSHPREKGQTTPDTEVADDVGSKS. Residue threonine 910 is modified to Phosphothreonine.

As to quaternary structure, interacts with PRX; this enhances phosphorylation. Identified in a dystroglycan complex that contains at least PRX, DRP2, UTRN, DMD and DAG1. As to expression, detected in quadriceps nerve Schwann cells. Detected in sciatic nerve. Detected in trigeminal nerve Schwann cells (at protein level). Detected in brain and spinal cord.

The protein resides in the postsynaptic density. The protein localises to the cell projection. Its subcellular location is the dendrite. It localises to the perikaryon. It is found in the cell membrane. Required for normal myelination and for normal organization of the cytoplasm and the formation of Cajal bands in myelinating Schwann cells. Required for normal PRX location at appositions between the abaxonal surface of the myelin sheath and the Schwann cell plasma membrane. Possibly involved in membrane-cytoskeleton interactions of the central nervous system. This Mus musculus (Mouse) protein is Dystrophin-related protein 2 (Drp2).